A 397-amino-acid polypeptide reads, in one-letter code: Elongation factor Tu 1 (397 aa).

The 197-residue stretch at 10–206 (KPHVNIGTIG…AVDENIPQPE (197 aa)) folds into the tr-type G domain. The G1 stretch occupies residues 19 to 26 (GHIDHGKT). Position 19–26 (19–26 (GHIDHGKT)) interacts with GTP. T26 is a Mg(2+) binding site. A G2 region spans residues 62 to 66 (GITIS). Positions 83–86 (DCPG) are G3. GTP contacts are provided by residues 83–87 (DCPGH) and 138–141 (NKAD). The tract at residues 138–141 (NKAD) is G4. A G5 region spans residues 176–178 (SAL).

It belongs to the TRAFAC class translation factor GTPase superfamily. Classic translation factor GTPase family. EF-Tu/EF-1A subfamily. As to quaternary structure, monomer.

Its subcellular location is the cytoplasm. It catalyses the reaction GTP + H2O = GDP + phosphate + H(+). In terms of biological role, GTP hydrolase that promotes the GTP-dependent binding of aminoacyl-tRNA to the A-site of ribosomes during protein biosynthesis. The chain is Elongation factor Tu 1 from Streptomyces avermitilis (strain ATCC 31267 / DSM 46492 / JCM 5070 / NBRC 14893 / NCIMB 12804 / NRRL 8165 / MA-4680).